Reading from the N-terminus, the 364-residue chain is UDP-N-acetylglucosamine--N-acetylmuramyl-(pentapeptide) pyrophosphoryl-undecaprenol N-acetylglucosamine transferase 1 (364 aa).

Residues 10–12 (TGG), Asn124, Ser195, Ile250, and Gln295 contribute to the UDP-N-acetyl-alpha-D-glucosamine site.

The protein belongs to the glycosyltransferase 28 family. MurG subfamily.

It is found in the cell membrane. The enzyme catalyses di-trans,octa-cis-undecaprenyl diphospho-N-acetyl-alpha-D-muramoyl-L-alanyl-D-glutamyl-meso-2,6-diaminopimeloyl-D-alanyl-D-alanine + UDP-N-acetyl-alpha-D-glucosamine = di-trans,octa-cis-undecaprenyl diphospho-[N-acetyl-alpha-D-glucosaminyl-(1-&gt;4)]-N-acetyl-alpha-D-muramoyl-L-alanyl-D-glutamyl-meso-2,6-diaminopimeloyl-D-alanyl-D-alanine + UDP + H(+). Its pathway is cell wall biogenesis; peptidoglycan biosynthesis. Functionally, cell wall formation. Catalyzes the transfer of a GlcNAc subunit on undecaprenyl-pyrophosphoryl-MurNAc-pentapeptide (lipid intermediate I) to form undecaprenyl-pyrophosphoryl-MurNAc-(pentapeptide)GlcNAc (lipid intermediate II). The chain is UDP-N-acetylglucosamine--N-acetylmuramyl-(pentapeptide) pyrophosphoryl-undecaprenol N-acetylglucosamine transferase 1 from Bacillus anthracis.